Consider the following 327-residue polypeptide: Methionyl-tRNA formyltransferase (327 aa).

Ser113 to Pro116 contributes to the (6S)-5,6,7,8-tetrahydrofolate binding site.

The protein belongs to the Fmt family.

It catalyses the reaction L-methionyl-tRNA(fMet) + (6R)-10-formyltetrahydrofolate = N-formyl-L-methionyl-tRNA(fMet) + (6S)-5,6,7,8-tetrahydrofolate + H(+). Functionally, attaches a formyl group to the free amino group of methionyl-tRNA(fMet). The formyl group appears to play a dual role in the initiator identity of N-formylmethionyl-tRNA by promoting its recognition by IF2 and preventing the misappropriation of this tRNA by the elongation apparatus. This is Methionyl-tRNA formyltransferase from Colwellia psychrerythraea (strain 34H / ATCC BAA-681) (Vibrio psychroerythus).